Here is a 104-residue protein sequence, read N- to C-terminus: Protein MHF2 homolog (104 aa).

It belongs to the CENP-X/MHF2 family.

Its subcellular location is the nucleus. In terms of biological role, acts in the same pathway as FANCM to restrain class II meiotic crossing over (CO), and acts with FANCM during meiosis to repair interstrand cross-links (ICLs). The polypeptide is Protein MHF2 homolog (Arabidopsis thaliana (Mouse-ear cress)).